Consider the following 86-residue polypeptide: MSDVEERINQIIQVLREQVVQDTAVPRNIRRAAEQAIEALMNKEKEPAVRAADAIAILEEISEDPNMPLHTRTIIWEVLGALEQIK.

It belongs to the UPF0147 family.

In Pyrococcus abyssi (strain GE5 / Orsay), this protein is UPF0147 protein PYRAB16980.